The primary structure comprises 282 residues: Thiazole synthase (282 aa).

Lys113 serves as the catalytic Schiff-base intermediate with DXP. Residues Gly174, 201-202 (AG), and 223-224 (NT) each bind 1-deoxy-D-xylulose 5-phosphate.

Belongs to the ThiG family. In terms of assembly, homotetramer. Forms heterodimers with either ThiH or ThiS.

It is found in the cytoplasm. It carries out the reaction [ThiS sulfur-carrier protein]-C-terminal-Gly-aminoethanethioate + 2-iminoacetate + 1-deoxy-D-xylulose 5-phosphate = [ThiS sulfur-carrier protein]-C-terminal Gly-Gly + 2-[(2R,5Z)-2-carboxy-4-methylthiazol-5(2H)-ylidene]ethyl phosphate + 2 H2O + H(+). Its pathway is cofactor biosynthesis; thiamine diphosphate biosynthesis. Its function is as follows. Catalyzes the rearrangement of 1-deoxy-D-xylulose 5-phosphate (DXP) to produce the thiazole phosphate moiety of thiamine. Sulfur is provided by the thiocarboxylate moiety of the carrier protein ThiS. In vitro, sulfur can be provided by H(2)S. This chain is Thiazole synthase, found in Cupriavidus metallidurans (strain ATCC 43123 / DSM 2839 / NBRC 102507 / CH34) (Ralstonia metallidurans).